We begin with the raw amino-acid sequence, 1182 residues long: Rho guanine nucleotide exchange factor osg-1 (1182 aa).

The span at 1–12 (MLNPNDADDSDS) shows a compositional bias: acidic residues. The interval 1 to 96 (MLNPNDADDS…TNSEPNVDMP (96 aa)) is disordered. Positions 29–41 (ATVSPSTRNSFYN) are enriched in polar residues. The segment covering 69-78 (ASRERSESRR) has biased composition (basic and acidic residues). The DH domain maps to 357–544 (VRHLAARELL…HCLAVAINQH (188 aa)). Residues 637–669 (EDVQISKDTLSQLEEVERKLESSREDDRVLKKM) are a coiled coil. The disordered stretch occupies residues 863 to 884 (INSSGSDTESSSDEGTSTAGQT). Low complexity predominate over residues 865-879 (SSGSDTESSSDEGTS). The stretch at 897 to 922 (VVNSTERVRSRARDRLARLRNSITSI) forms a coiled coil.

As to expression, expressed in muscles in the body wall and head, and in the nervous system in neurons including FLP and ASE neurons in the head.

Its function is as follows. Probable guanine nucleotide exchange factor which regulates the Rho GTPase rho-1. Functions in ASE sensory neurons where it promotes neuronal degeneration under conditions of oxidative stress. This Caenorhabditis elegans protein is Rho guanine nucleotide exchange factor osg-1.